Reading from the N-terminus, the 222-residue chain is Large ribosomal subunit protein uL4 (222 aa).

The tract at residues Thr50–Ala72 is disordered.

Belongs to the universal ribosomal protein uL4 family. Part of the 50S ribosomal subunit.

Functionally, one of the primary rRNA binding proteins, this protein initially binds near the 5'-end of the 23S rRNA. It is important during the early stages of 50S assembly. It makes multiple contacts with different domains of the 23S rRNA in the assembled 50S subunit and ribosome. In terms of biological role, forms part of the polypeptide exit tunnel. In Chlamydia muridarum (strain MoPn / Nigg), this protein is Large ribosomal subunit protein uL4.